The primary structure comprises 379 residues: Cytochrome b (379 aa).

4 consecutive transmembrane segments (helical) span residues 33–53, 77–98, 113–133, and 178–198; these read FGSL…FLAM, WLIR…FIHV, WNIG…GYVL, and FFAF…VHLL. Heme b-binding residues include His-83 and His-97. Positions 182 and 196 each coordinate heme b. His-201 contributes to the a ubiquinone binding site. 4 helical membrane passes run 226 to 246, 288 to 308, 320 to 340, and 347 to 367; these read TKDL…VLFF, LGGV…PLLN, VTQV…WIGG, and FTTI…ILIP.

The protein belongs to the cytochrome b family. In terms of assembly, the cytochrome bc1 complex contains 11 subunits: 3 respiratory subunits (MT-CYB, CYC1 and UQCRFS1), 2 core proteins (UQCRC1 and UQCRC2) and 6 low-molecular weight proteins (UQCRH/QCR6, UQCRB/QCR7, UQCRQ/QCR8, UQCR10/QCR9, UQCR11/QCR10 and a cleavage product of UQCRFS1). This cytochrome bc1 complex then forms a dimer. The cofactor is heme b.

It is found in the mitochondrion inner membrane. In terms of biological role, component of the ubiquinol-cytochrome c reductase complex (complex III or cytochrome b-c1 complex) that is part of the mitochondrial respiratory chain. The b-c1 complex mediates electron transfer from ubiquinol to cytochrome c. Contributes to the generation of a proton gradient across the mitochondrial membrane that is then used for ATP synthesis. This is Cytochrome b (MT-CYB) from Akodon cursor (Cursor grass mouse).